Here is a 198-residue protein sequence, read N- to C-terminus: Ribonuclease HII (198 aa).

Positions 1-198 (MLCGIDEAGR…QRRSFFVKNL (198 aa)) constitute an RNase H type-2 domain. A divalent metal cation-binding residues include D6, E7, and D112.

It belongs to the RNase HII family. Requires Mn(2+) as cofactor. The cofactor is Mg(2+).

It is found in the cytoplasm. It carries out the reaction Endonucleolytic cleavage to 5'-phosphomonoester.. Endonuclease that specifically degrades the RNA of RNA-DNA hybrids. The protein is Ribonuclease HII of Treponema denticola (strain ATCC 35405 / DSM 14222 / CIP 103919 / JCM 8153 / KCTC 15104).